Consider the following 117-residue polypeptide: Large ribosomal subunit protein uL22 (117 aa).

It belongs to the universal ribosomal protein uL22 family. In terms of assembly, part of the 50S ribosomal subunit.

This protein binds specifically to 23S rRNA; its binding is stimulated by other ribosomal proteins, e.g. L4, L17, and L20. It is important during the early stages of 50S assembly. It makes multiple contacts with different domains of the 23S rRNA in the assembled 50S subunit and ribosome. In terms of biological role, the globular domain of the protein is located near the polypeptide exit tunnel on the outside of the subunit, while an extended beta-hairpin is found that lines the wall of the exit tunnel in the center of the 70S ribosome. The polypeptide is Large ribosomal subunit protein uL22 (Synechococcus elongatus (strain ATCC 33912 / PCC 7942 / FACHB-805) (Anacystis nidulans R2)).